Here is a 291-residue protein sequence, read N- to C-terminus: Phycobilisome 32.1 kDa linker polypeptide, phycocyanin-associated, rod 1 (291 aa).

Residues 2 to 179 form the PBS-linker domain; the sequence is AITTAASRLG…LYRGYANSDR (178 aa). A CpcD-like domain is found at 236-288; the sequence is SKLFRVEITAISAPGYPKVRRSNKAVIVPFEQLNQTLQQINRLGGKVASITPA.

The protein belongs to the phycobilisome linker protein family. In terms of assembly, part of 2 PBS rod complexes, the conventional CpcG-PBS rod and a photosystem I-specific CpcL-PBS rod, both of which include ferredoxin--NADP reductase (petH). CpcG-PBS has on average 3 stacked phycocyanin hexamers (PC, CpcA and CpcB). Linker CpcG connects the PC stack to the thylakoid, the hexamers are linked by 1 copy of CpcC1, 1 copy of CpcC2 and the stack is terminated by a single copy of CpcD. The CpcL-PBS has on average 5 stacked phycocyanin hexamers (PC, CpcA and CpcB). Linker CpcL connects the PC stack to the thylakoid, the hexamers are linked by 1 copy of CpcC1, 3 copies of CpcC2 and the stack is terminated by a single copy of CpcD.

It localises to the cellular thylakoid membrane. Its function is as follows. Rod linker protein, connecting hexameric phycocyanin (PC, made by cpcA and cpcB) rods in the phycobilisome (PBS). PC is the major phycobiliprotein in PBS rods. Linker polypeptides determine the state of aggregation and the location of the disk-shaped phycobiliprotein units within the phycobilisome and modulate their spectroscopic properties in order to mediate a directed and optimal energy transfer. This Synechocystis sp. (strain ATCC 27184 / PCC 6803 / Kazusa) protein is Phycobilisome 32.1 kDa linker polypeptide, phycocyanin-associated, rod 1 (cpcC1).